The following is a 427-amino-acid chain: Glutamate-1-semialdehyde 2,1-aminomutase 1 (427 aa).

N6-(pyridoxal phosphate)lysine is present on Lys-267.

This sequence belongs to the class-III pyridoxal-phosphate-dependent aminotransferase family. HemL subfamily. Homodimer. The cofactor is pyridoxal 5'-phosphate.

The protein resides in the cytoplasm. The catalysed reaction is (S)-4-amino-5-oxopentanoate = 5-aminolevulinate. Its pathway is porphyrin-containing compound metabolism; protoporphyrin-IX biosynthesis; 5-aminolevulinate from L-glutamyl-tRNA(Glu): step 2/2. The sequence is that of Glutamate-1-semialdehyde 2,1-aminomutase 1 from Staphylococcus epidermidis (strain ATCC 35984 / DSM 28319 / BCRC 17069 / CCUG 31568 / BM 3577 / RP62A).